Here is a 483-residue protein sequence, read N- to C-terminus: Regulatory protein ViaA (483 aa).

Belongs to the ViaA family. In terms of assembly, homodimer. Interacts with RavA.

The protein localises to the cytoplasm. Its function is as follows. Component of the RavA-ViaA chaperone complex, which may act on the membrane to optimize the function of some of the respiratory chains. ViaA stimulates the ATPase activity of RavA. In Escherichia coli O1:K1 / APEC, this protein is Regulatory protein ViaA.